The chain runs to 233 residues: Small ribosomal subunit protein uS2 (233 aa).

Belongs to the universal ribosomal protein uS2 family.

The protein is Small ribosomal subunit protein uS2 of Bacillus anthracis.